The primary structure comprises 344 residues: Heat-inducible transcription repressor HrcA (344 aa).

Belongs to the HrcA family.

In terms of biological role, negative regulator of class I heat shock genes (grpE-dnaK-dnaJ and groELS operons). Prevents heat-shock induction of these operons. The polypeptide is Heat-inducible transcription repressor HrcA (Streptococcus pyogenes serotype M1).